Here is a 545-residue protein sequence, read N- to C-terminus: CTP synthase (545 aa).

The tract at residues 1-265 (MSKYIFVTGG…DDLVVQNLGL (265 aa)) is amidoligase domain. Serine 13 contacts CTP. Serine 13 contacts UTP. Residues 14–19 (SLGKGA) and aspartate 71 contribute to the ATP site. Aspartate 71 and glutamate 139 together coordinate Mg(2+). Residues 146-148 (DIE), 186-191 (KTKPTQ), and lysine 222 each bind CTP. Residues 186–191 (KTKPTQ) and lysine 222 contribute to the UTP site. Residues 290-541 (VIALVGKYVG…MRAAIAQRER (252 aa)) enclose the Glutamine amidotransferase type-1 domain. Glycine 351 contacts L-glutamine. Catalysis depends on cysteine 378, which acts as the Nucleophile; for glutamine hydrolysis. Residues 379 to 382 (LGMQ), glutamate 402, and arginine 469 contribute to the L-glutamine site. Catalysis depends on residues histidine 514 and glutamate 516.

It belongs to the CTP synthase family. In terms of assembly, homotetramer.

It catalyses the reaction UTP + L-glutamine + ATP + H2O = CTP + L-glutamate + ADP + phosphate + 2 H(+). The enzyme catalyses L-glutamine + H2O = L-glutamate + NH4(+). The catalysed reaction is UTP + NH4(+) + ATP = CTP + ADP + phosphate + 2 H(+). It functions in the pathway pyrimidine metabolism; CTP biosynthesis via de novo pathway; CTP from UDP: step 2/2. Its activity is regulated as follows. Allosterically activated by GTP, when glutamine is the substrate; GTP has no effect on the reaction when ammonia is the substrate. The allosteric effector GTP functions by stabilizing the protein conformation that binds the tetrahedral intermediate(s) formed during glutamine hydrolysis. Inhibited by the product CTP, via allosteric rather than competitive inhibition. Its function is as follows. Catalyzes the ATP-dependent amination of UTP to CTP with either L-glutamine or ammonia as the source of nitrogen. Regulates intracellular CTP levels through interactions with the four ribonucleotide triphosphates. The sequence is that of CTP synthase from Acidithiobacillus ferrooxidans (strain ATCC 23270 / DSM 14882 / CIP 104768 / NCIMB 8455) (Ferrobacillus ferrooxidans (strain ATCC 23270)).